The sequence spans 141 residues: Nucleoside triphosphatase NudI (141 aa).

Residues 1–141 (MRQRTIVCPL…RHTLALKGLL (141 aa)) form the Nudix hydrolase domain. A Nudix box motif is present at residues 38 to 59 (GGVEPGERIEEALRREIREELG).

This sequence belongs to the Nudix hydrolase family. NudI subfamily. Monomer. It depends on Mg(2+) as a cofactor.

The catalysed reaction is a ribonucleoside 5'-triphosphate + H2O = a ribonucleoside 5'-phosphate + diphosphate + H(+). It carries out the reaction a 2'-deoxyribonucleoside 5'-triphosphate + H2O = a 2'-deoxyribonucleoside 5'-phosphate + diphosphate + H(+). It catalyses the reaction dUTP + H2O = dUMP + diphosphate + H(+). The enzyme catalyses dTTP + H2O = dTMP + diphosphate + H(+). The catalysed reaction is dCTP + H2O = dCMP + diphosphate + H(+). Functionally, catalyzes the hydrolysis of nucleoside triphosphates, with a preference for pyrimidine deoxynucleoside triphosphates (dUTP, dTTP and dCTP). This Salmonella newport (strain SL254) protein is Nucleoside triphosphatase NudI.